A 93-amino-acid chain; its full sequence is Small ribosomal subunit protein uS19 (93 aa).

It belongs to the universal ribosomal protein uS19 family.

Functionally, protein S19 forms a complex with S13 that binds strongly to the 16S ribosomal RNA. The chain is Small ribosomal subunit protein uS19 from Citrifermentans bemidjiense (strain ATCC BAA-1014 / DSM 16622 / JCM 12645 / Bem) (Geobacter bemidjiensis).